The following is a 270-amino-acid chain: SAMP-activating enzyme E1 (270 aa).

Residues G42, D63, 70-74, and K87 each bind ATP; that span reads SNLQR. Residue K113 forms a Glycyl lysine isopeptide (Lys-Gly) (interchain with G-Cter in SAMP2) linkage. 131–132 is an ATP binding site; sequence DN. Zn(2+)-binding residues include C171 and C174. Catalysis depends on C188, which acts as the Glycyl thioester intermediate. 2 residues coordinate Zn(2+): C245 and C248.

Belongs to the HesA/MoeB/ThiF family. Interacts with NcsA. The cofactor is Zn(2+). In terms of processing, sampylated at Lys-113 with the archaeal ubiquitin-like protein SAMP2. Also sampylated with SAMP1.

The enzyme catalyses [small archaeal modifier protein]-C-terminal Gly-Gly + ATP + H(+) = [small archaeal modifier protein]-C-terminal Gly-Gly-AMP + diphosphate. Functionally, likely activates multiple ubiquitin-like SAMPs for protein conjugation as well as for sulfur transfer, via ATP-dependent adenylation at their C-terminus. In fact, it is required for the formation of all three SAMP1-, SAMP2- and SAMP3-protein conjugates, and for molybdenum cofactor (MoCo) biosynthesis and thiolation of tRNAs. The chain is SAMP-activating enzyme E1 (ubaA) from Haloferax volcanii (strain ATCC 29605 / DSM 3757 / JCM 8879 / NBRC 14742 / NCIMB 2012 / VKM B-1768 / DS2) (Halobacterium volcanii).